Here is a 378-residue protein sequence, read N- to C-terminus: Cobalt-precorrin-5B C(1)-methyltransferase (378 aa).

It belongs to the CbiD family.

The catalysed reaction is Co-precorrin-5B + S-adenosyl-L-methionine = Co-precorrin-6A + S-adenosyl-L-homocysteine. Its pathway is cofactor biosynthesis; adenosylcobalamin biosynthesis; cob(II)yrinate a,c-diamide from sirohydrochlorin (anaerobic route): step 6/10. Functionally, catalyzes the methylation of C-1 in cobalt-precorrin-5B to form cobalt-precorrin-6A. This Tolumonas auensis (strain DSM 9187 / NBRC 110442 / TA 4) protein is Cobalt-precorrin-5B C(1)-methyltransferase.